The following is a 306-amino-acid chain: Grixazone synthase (306 aa).

The Cu(2+) site is built by H39, H58, H67, H222, H226, and H248.

The protein belongs to the tyrosinase family. The cofactor is Cu(2+).

The catalysed reaction is 2 3-amino-4-hydroxybenzoate + N-acetyl-L-cysteine + 2 O2 + H(+) = grixazone B + CO2 + 4 H2O. It catalyses the reaction 2 3-amino-4-hydroxybenzaldehyde + N-acetyl-L-cysteine + 2 O2 = grixazone A + formate + 3 H2O + H(+). It carries out the reaction 4 2-aminophenol + 3 O2 = 2 2-aminophenoxazin-3-one + 6 H2O. Its activity is regulated as follows. Inhibited by 3-amino-4-hydroxybenzensulfonic acid, 4-hydroxy-3-nitrobenzaldehyde, L-tyrosine, p-hydroxybenzaldehyde. Activated by the copper chaperone GriE. Functionally, involved in the biosynthesis of the parasiticide antibiotic grixazone. Catalyzes the oxidation of 3-amino-4-hydroxybenzoate (3,4-AHBOA) to yield the corresponding quinone imine which is then non-enzymatically conjugated with the thiol group of N-acetylcysteine. The resultant compound is oxidized to its quinone imine enzymatically and is then dimerized non-enzymatically with another quinone imine oxidized by GriF to yield grixazone B. 3-amino-4-hydroxybenzaldehyde (3,4-AHBAL) can also be used as substrate to yield grixazone A. In the grixazone biosynthetic pathway, it can also function as an o-aminophenol oxidase that catalyzes the formation of the phenoxazinone chromophore from alpha-aminophenol. It can also use 2-amino-4-methylphenol, and to a lesser extent, 3,4-dihydroxybenzaldehyde, catechol and 3,4-dihydroxy-L-phenylalanine (L-DOPA) as substrates. In contrast to tyrosinases, it does not display monophenolase activity. The protein is Grixazone synthase of Streptomyces griseus subsp. griseus (strain JCM 4626 / CBS 651.72 / NBRC 13350 / KCC S-0626 / ISP 5235).